The primary structure comprises 411 residues: 1-deoxy-D-xylulose 5-phosphate reductoisomerase (411 aa).

8 residues coordinate NADPH: Thr23, Gly24, Ser25, Ile26, Gly49, Arg50, Asn51, and Asn137. Lys138 contacts 1-deoxy-D-xylulose 5-phosphate. NADPH is bound at residue Glu139. Asp163 is a Mn(2+) binding site. Positions 164, 165, 199, and 222 each coordinate 1-deoxy-D-xylulose 5-phosphate. Residue Glu165 coordinates Mn(2+). Position 228 (Gly228) interacts with NADPH. Positions 235, 240, 241, and 244 each coordinate 1-deoxy-D-xylulose 5-phosphate. Glu244 is a Mn(2+) binding site.

Belongs to the DXR family. The cofactor is Mg(2+). Requires Mn(2+) as cofactor.

The enzyme catalyses 2-C-methyl-D-erythritol 4-phosphate + NADP(+) = 1-deoxy-D-xylulose 5-phosphate + NADPH + H(+). It participates in isoprenoid biosynthesis; isopentenyl diphosphate biosynthesis via DXP pathway; isopentenyl diphosphate from 1-deoxy-D-xylulose 5-phosphate: step 1/6. Its function is as follows. Catalyzes the NADPH-dependent rearrangement and reduction of 1-deoxy-D-xylulose-5-phosphate (DXP) to 2-C-methyl-D-erythritol 4-phosphate (MEP). This Mannheimia succiniciproducens (strain KCTC 0769BP / MBEL55E) protein is 1-deoxy-D-xylulose 5-phosphate reductoisomerase.